The following is a 540-amino-acid chain: Chaperonin GroEL (540 aa).

ATP is bound by residues 29–32, 86–90, Gly-413, 476–478, and Asp-492; these read TIGP, DGTTT, and NAA.

Belongs to the chaperonin (HSP60) family. Forms a cylinder of 14 subunits composed of two heptameric rings stacked back-to-back. Interacts with the co-chaperonin GroES.

Its subcellular location is the cytoplasm. It carries out the reaction ATP + H2O + a folded polypeptide = ADP + phosphate + an unfolded polypeptide.. Together with its co-chaperonin GroES, plays an essential role in assisting protein folding. The GroEL-GroES system forms a nano-cage that allows encapsulation of the non-native substrate proteins and provides a physical environment optimized to promote and accelerate protein folding. The sequence is that of Chaperonin GroEL from Staphylococcus carnosus (strain TM300).